We begin with the raw amino-acid sequence, 294 residues long: MNKINRVAIVGGTHGNEFTGAFLVKKFQQFPEVIQKPSFETLTILGNPKAFEAGKRYIEKDLNRCFLTESLQNTNLSSYEDIRAKQIAGVLGAENKPNVDVVIDLHSTTANMGLSIILGNQDPFLLKLCAYLSDINPLVKVCYTIPEKGSNFLRSLNKLGFVIEVGAVAQGVLNAELFQKTEQLIYTILDYLEQYNRGNIPKINNLLALYKFTGTVDYPRNENGDIQGMIHPDIQFRDYEPLNPGDPLFLTLDGKAIAYEGTSTVYPIFINEAAYYEKGIAMLFTEKQLINPSS.

Zn(2+) is bound by residues His14 and Glu17. Residues Arg56 and 63–64 (NR) each bind substrate. His106 is a binding site for Zn(2+). 2 residues coordinate substrate: Glu164 and Tyr275.

It belongs to the AspA/AstE family. Aspartoacylase subfamily. Requires Zn(2+) as cofactor.

The enzyme catalyses an N-acyl-L-aspartate + H2O = a carboxylate + L-aspartate. This chain is Probable aspartoacylase, found in Nostoc sp. (strain PCC 7120 / SAG 25.82 / UTEX 2576).